We begin with the raw amino-acid sequence, 149 residues long: Macrodomain Ter protein (149 aa).

This sequence belongs to the MatP family. In terms of assembly, homodimer.

The protein localises to the cytoplasm. Its function is as follows. Required for spatial organization of the terminus region of the chromosome (Ter macrodomain) during the cell cycle. Prevents early segregation of duplicated Ter macrodomains during cell division. Binds specifically to matS, which is a 13 bp signature motif repeated within the Ter macrodomain. This Vibrio campbellii (strain ATCC BAA-1116) protein is Macrodomain Ter protein.